The primary structure comprises 217 residues: ATP phosphoribosyltransferase (217 aa).

This sequence belongs to the ATP phosphoribosyltransferase family. Short subfamily. As to quaternary structure, heteromultimer composed of HisG and HisZ subunits.

Its subcellular location is the cytoplasm. It catalyses the reaction 1-(5-phospho-beta-D-ribosyl)-ATP + diphosphate = 5-phospho-alpha-D-ribose 1-diphosphate + ATP. It participates in amino-acid biosynthesis; L-histidine biosynthesis; L-histidine from 5-phospho-alpha-D-ribose 1-diphosphate: step 1/9. In terms of biological role, catalyzes the condensation of ATP and 5-phosphoribose 1-diphosphate to form N'-(5'-phosphoribosyl)-ATP (PR-ATP). Has a crucial role in the pathway because the rate of histidine biosynthesis seems to be controlled primarily by regulation of HisG enzymatic activity. The sequence is that of ATP phosphoribosyltransferase from Burkholderia orbicola (strain AU 1054).